The chain runs to 243 residues: Transcription factor TCP6 (243 aa).

A disordered region spans residues 1-55; that stretch reads MVMEPKKNQNLPSFLNPSRQNQDNDKKRKQTEVKGFDIVVGEKRKKKENEEEDQE. Positions 8–21 are enriched in polar residues; sequence NQNLPSFLNPSRQN. Over residues 22-35 the composition is skewed to basic and acidic residues; sequence QDNDKKRKQTEVKG. Positions 42-66 form a coiled coil; the sequence is EKRKKKENEEEDQEIQILYEKEKKK. Positions 68-122 constitute a TCP domain; the sequence is NKDRHLKVEGRGRRVRLPPLCAARIYQLTKELGHKSDGETLEWLLQHAEPSILSA.

Interacts with SPL.

It is found in the nucleus. In Arabidopsis thaliana (Mouse-ear cress), this protein is Transcription factor TCP6 (TCP6).